The chain runs to 132 residues: FPRL1 inhibitory protein (132 aa).

Positions 1-28 are cleaved as a signal peptide; sequence MKKNITKVIIASTVIATGLLTQTNDAKA.

This sequence belongs to the CHIPS/FLIPr family.

Its subcellular location is the secreted. Its function is as follows. May be involved in countering the first line of host defense mechanisms. Impairs the leukocyte response to FPRL1 agonists by binding directly to host FPRL1. This chain is FPRL1 inhibitory protein (flr), found in Staphylococcus aureus (strain MW2).